The chain runs to 245 residues: Actin-like protein 10 (245 aa).

It belongs to the actin family.

This Homo sapiens (Human) protein is Actin-like protein 10 (ACTL10).